The sequence spans 256 residues: 1-(5-phosphoribosyl)-5-[(5-phosphoribosylamino)methylideneamino] imidazole-4-carboxamide isomerase (256 aa).

D8 (proton acceptor) is an active-site residue. The Proton donor role is filled by D129.

Belongs to the HisA/HisF family.

It localises to the cytoplasm. It catalyses the reaction 1-(5-phospho-beta-D-ribosyl)-5-[(5-phospho-beta-D-ribosylamino)methylideneamino]imidazole-4-carboxamide = 5-[(5-phospho-1-deoxy-D-ribulos-1-ylimino)methylamino]-1-(5-phospho-beta-D-ribosyl)imidazole-4-carboxamide. It participates in amino-acid biosynthesis; L-histidine biosynthesis; L-histidine from 5-phospho-alpha-D-ribose 1-diphosphate: step 4/9. This Synechococcus elongatus (strain ATCC 33912 / PCC 7942 / FACHB-805) (Anacystis nidulans R2) protein is 1-(5-phosphoribosyl)-5-[(5-phosphoribosylamino)methylideneamino] imidazole-4-carboxamide isomerase.